Reading from the N-terminus, the 186-residue chain is MRILGIDPGLQTTGFGVVDVDGHRLRYVASGTVRTTGRATGLALGDLPGRLKVLFDGVSEVAARYQPSTAAVEIIFVNVNPQSTLLLGQARGAALTALVNANLPVAEYTALQMKKAVVGHGRAAKSQVQEMVRRLLELPGLPGTDAADALGLAITHAHAGAAMARVGEVAQLTRRQHAMYKAGRSY.

Catalysis depends on residues Asp7, Glu73, and Asp145. 3 residues coordinate Mg(2+): Asp7, Glu73, and Asp145.

This sequence belongs to the RuvC family. Homodimer which binds Holliday junction (HJ) DNA. The HJ becomes 2-fold symmetrical on binding to RuvC with unstacked arms; it has a different conformation from HJ DNA in complex with RuvA. In the full resolvosome a probable DNA-RuvA(4)-RuvB(12)-RuvC(2) complex forms which resolves the HJ. Mg(2+) serves as cofactor.

The protein localises to the cytoplasm. The enzyme catalyses Endonucleolytic cleavage at a junction such as a reciprocal single-stranded crossover between two homologous DNA duplexes (Holliday junction).. Functionally, the RuvA-RuvB-RuvC complex processes Holliday junction (HJ) DNA during genetic recombination and DNA repair. Endonuclease that resolves HJ intermediates. Cleaves cruciform DNA by making single-stranded nicks across the HJ at symmetrical positions within the homologous arms, yielding a 5'-phosphate and a 3'-hydroxyl group; requires a central core of homology in the junction. The consensus cleavage sequence is 5'-(A/T)TT(C/G)-3'. Cleavage occurs on the 3'-side of the TT dinucleotide at the point of strand exchange. HJ branch migration catalyzed by RuvA-RuvB allows RuvC to scan DNA until it finds its consensus sequence, where it cleaves and resolves the cruciform DNA. In Acidovorax sp. (strain JS42), this protein is Crossover junction endodeoxyribonuclease RuvC.